The sequence spans 113 residues: U11-theraphotoxin-Hhn1s (113 aa).

The first 21 residues, Met1–Ala21, serve as a signal peptide directing secretion. Residues Asp22–Arg74 constitute a propeptide that is removed on maturation. A disordered region spans residues Glu61–Asp83. 3 disulfides stabilise this stretch: Cys75–Cys90, Cys82–Cys95, and Cys89–Cys110.

The protein belongs to the neurotoxin 14 (magi-1) family. 01 (HNTX-16) subfamily. In terms of tissue distribution, expressed by the venom gland.

It localises to the secreted. In terms of biological role, probable ion channel inhibitor. This is U11-theraphotoxin-Hhn1s from Cyriopagopus hainanus (Chinese bird spider).